A 401-amino-acid polypeptide reads, in one-letter code: Alpha-(1,4)-fucosyltransferase (401 aa).

The Cytoplasmic segment spans residues 1–4; it reads MPMR. The chain crosses the membrane as a helical; Signal-anchor for type II membrane protein span at residues 5-27; it reads YLNAMAALLMMFFTLLILSFTGI. Topologically, residues 28-401 are lumenal; sequence LEFPSASTSM…SRRGGKNAGV (374 aa). N-linked (GlcNAc...) asparagine glycosylation occurs at Asn85.

It belongs to the glycosyltransferase 10 family. In terms of tissue distribution, present in root, stem, flower buds and green siliques.

It localises to the golgi apparatus. Its subcellular location is the golgi stack membrane. It functions in the pathway protein modification; protein glycosylation. Its function is as follows. May be involved in cell wall synthesis. Catalyzes alpha-1,4 glycosidic linkages and generates Lewis-a epitopes. The protein is Alpha-(1,4)-fucosyltransferase (FUT13) of Arabidopsis thaliana (Mouse-ear cress).